The primary structure comprises 69 residues: Large ribosomal subunit protein bL31 (69 aa).

4 residues coordinate Zn(2+): Cys-17, Cys-19, Cys-37, and Cys-40.

This sequence belongs to the bacterial ribosomal protein bL31 family. Type A subfamily. Part of the 50S ribosomal subunit. Zn(2+) is required as a cofactor.

Functionally, binds the 23S rRNA. The protein is Large ribosomal subunit protein bL31 of Caldicellulosiruptor bescii (strain ATCC BAA-1888 / DSM 6725 / KCTC 15123 / Z-1320) (Anaerocellum thermophilum).